Consider the following 93-residue polypeptide: Small ribosomal subunit protein uS19 (93 aa).

Belongs to the universal ribosomal protein uS19 family.

Protein S19 forms a complex with S13 that binds strongly to the 16S ribosomal RNA. This is Small ribosomal subunit protein uS19 from Phytoplasma australiense.